The primary structure comprises 5112 residues: Malformin synthetase mlfA (5112 aa).

Residues 225–616 (ERHAANRPHS…CGRADTQVKL (392 aa)) are adenylation 1. The region spanning 757–830 (SRLEQEIQLA…EAASLAEVQE (74 aa)) is the Carrier 1 domain. At Ser-791 the chain carries O-(pantetheine 4'-phosphoryl)serine. Positions 868-1299 (EDVFPCTTMQ…ALDSLTLLQA (432 aa)) are condensation 1. The segment at 1327-1716 (DRRVTRQPDT…GRKDTQVKLR (390 aa)) is adenylation 2. Residues 1854–1931 (TAASELERTL…QLAAELGESP (78 aa)) enclose the Carrier 2 domain. O-(pantetheine 4'-phosphoryl)serine is present on Ser-1891. Disordered regions lie at residues 1926 to 1961 (ELGE…DGVD) and 1994 to 2034 (GGSS…VPEP). Low complexity-rich tracts occupy residues 1930–1941 (SPRSSTSSASSS) and 1994–2012 (GGSS…SSSS). Positions 2064 to 2479 (EDIYPATALQ…AVSYSDKQTL (416 aa)) are condensation 2. Positions 2502-2894 (IRTPHAPAVC…IGRRDGQVKL (393 aa)) are adenylation 3. One can recognise a Carrier 3 domain in the interval 3030–3106 (RPTTAKECEM…QLLFHLRNAK (77 aa)). Ser-3067 carries the O-(pantetheine 4'-phosphoryl)serine modification. 2 condensation regions span residues 3122-3586 (WVDL…TYEQ) and 3607-4044 (NIYP…EQLV). The segment at 4069–4459 (HSSRQAVCAW…VGRKDNQIKF (391 aa)) is adenylation 4. Residues 4593–4669 (MPSTEAECIM…DLARHNSLVQ (77 aa)) form the Carrier 4 domain. Ser-4630 is modified (O-(pantetheine 4'-phosphoryl)serine). The interval 4724–5106 (IVVDIPGRIS…VEKVVALLRD (383 aa)) is condensation 5.

The protein belongs to the NRP synthetase family.

The protein operates within secondary metabolite biosynthesis. In terms of biological role, nonribosomal peptide synthetase; part of the gene cluster that mediates the biosynthesis of malformins, cyclic pentapeptides with a disulfide bond between 2 consecutive cysteins, that show potential anti-tumor as well as antimalarial and antitrypanosomal properties. The nonribosomal peptide synthetase mlfA is responsible of the formation of the cyclic pentapeptide. MlfA probably acts iteratively on one amino acid and possesses multiple amino acid specificities since it is involved in the biosynthesis of multiple malformins, including malformin C and malformin A2. Malformin C corresponds to a cyclo[D-Cys-D-Cys-Val-D-Leu-Val] pentapeptide whereas malformin A2 corresponds to a cyclo[D-Cys-D-Cys-Val-D-Leu-Ile] pentapeptide. The malformin biosynthesis clusters in malformin-producing fungi also contain enzymes involved in the formation of the disulfide bond between the two consecutive cysteins within malformins, in addition to additional tailoring enzymes such as methyltransferases or oxidoreductases. They are also composed of up to 4 major facilitator superfamily transporters, and transcription factors probably involved in the regulation of the expression of those clusters. This is Malformin synthetase mlfA from Aspergillus brasiliensis (strain CBS 101740 / IMI 381727 / IBT 21946).